We begin with the raw amino-acid sequence, 501 residues long: Beta-secretase 1 (501 aa).

Residues 1–21 (MAPALRWLLLWVGSGMLPAQG) form the signal peptide. Positions 22–45 (THLGIRLPLRSGLAGPPLGLRLPR) are excised as a propeptide. Topologically, residues 22–457 (THLGIRLPLR…PQTDESTLMT (436 aa)) are extracellular. Positions 75–416 (YYVEMTVGSP…DRARKRIGFA (342 aa)) constitute a Peptidase A1 domain. Residue aspartate 93 is part of the active site. Lysine 126 is subject to N6-acetyllysine. Residues asparagine 153, asparagine 172, and asparagine 223 are each glycosylated (N-linked (GlcNAc...) asparagine). Cystine bridges form between cysteine 216–cysteine 420, cysteine 278–cysteine 443, and cysteine 330–cysteine 380. An N6-acetyllysine mark is found at lysine 275, lysine 279, and lysine 285. The active site involves aspartate 289. An N6-acetyllysine mark is found at lysine 299, lysine 300, and lysine 307. Residue asparagine 354 is glycosylated (N-linked (GlcNAc...) asparagine). A helical transmembrane segment spans residues 458 to 478 (IAYVMAAICALFMLPLCLMVC). S-palmitoyl cysteine attachment occurs at residues cysteine 474, cysteine 478, cysteine 482, and cysteine 485. The Cytoplasmic portion of the chain corresponds to 479-501 (QWRCLRCLRHQHDDFADDISLLK). The interval 479 to 501 (QWRCLRCLRHQHDDFADDISLLK) is interaction with RTN3. The DXXLL motif lies at 496 to 500 (DISLL). Phosphoserine is present on serine 498. Lysine 501 participates in a covalent cross-link: Glycyl lysine isopeptide (Lys-Gly) (interchain with G-Cter in ubiquitin).

This sequence belongs to the peptidase A1 family. In terms of assembly, monomer. Interacts (via DXXLL motif) with GGA1, GGA2 and GGA3 (via their VHS domain); the interaction highly increases when BACE1 is phosphorylated at Ser-498. Interacts with RTN1; RTN2; RTN3 and RTN4; the interaction leads to inhibition of amyloid precursor protein processing. Interacts with SNX6. Interacts with PCSK9. Interacts with NAT8 and NAT8B. Interacts with BIN1. Interacts (via extracellular domain) with ADAM10 (via extracellular domain). Interacts with SORL1; this interaction may affect binding with APP and hence reduce APP cleavage. Interacts with NRDC AND NRG1. In terms of processing, palmitoylation mediates lipid raft localization. Post-translationally, acetylated in the endoplasmic reticulum at Lys-126, Lys-275, Lys-279, Lys-285, Lys-299, Lys-300 and Lys-307. Acetylation by NAT8 and NAT8B is transient and deacetylation probably occurs in the Golgi. Acetylation regulates the maturation, the transport to the plasma membrane, the stability and the expression of the protein. Ubiquitinated at Lys-501, ubiquitination leads to lysosomal degradation. Monoubiquitinated and 'Lys-63'-linked polyubitinated. Deubiquitnated by USP8; inhibits lysosomal degradation. In terms of processing, phosphorylation at Ser-498 is required for interaction with GGA1 and retrograded transport from endosomal compartments to the trans-Golgi network. Non-phosphorylated BACE1 enters a direct recycling route to the cell surface. Post-translationally, N-Glycosylated. Addition of a bisecting N-acetylglucosamine by MGAT3 blocks lysosomal targeting, further degradation and is required for maintaining stability under stress conditions.

Its subcellular location is the cell membrane. It localises to the golgi apparatus. The protein localises to the trans-Golgi network. It is found in the endoplasmic reticulum. The protein resides in the endosome. Its subcellular location is the cell surface. It localises to the cytoplasmic vesicle membrane. The protein localises to the membrane raft. It is found in the lysosome. The protein resides in the late endosome. Its subcellular location is the early endosome. It localises to the recycling endosome. The protein localises to the cell projection. It is found in the axon. The protein resides in the dendrite. The enzyme catalyses Broad endopeptidase specificity. Cleaves Glu-Val-Asn-Leu-|-Asp-Ala-Glu-Phe in the Swedish variant of Alzheimer's amyloid precursor protein.. Its activity is regulated as follows. Inhibited by RTN3 and RTN4. In terms of biological role, responsible for the proteolytic processing of the amyloid precursor protein (APP). Cleaves at the N-terminus of the A-beta peptide sequence, between residues 671 and 672 of APP, leads to the generation and extracellular release of beta-cleaved soluble APP, and a corresponding cell-associated C-terminal fragment which is later released by gamma-secretase. Cleaves CHL1. In Rattus norvegicus (Rat), this protein is Beta-secretase 1 (Bace1).